A 418-amino-acid polypeptide reads, in one-letter code: Serine/threonine-protein kinase PCRK1 (418 aa).

A disordered region spans residues 36-63 (GSEFNSRDVSGTSTESSMGRKNSYPPVS). Positions 84–369 (FSRSVMIGEG…EVLEMVNKIV (286 aa)) constitute a Protein kinase domain. ATP-binding positions include 90-98 (IGEGGFGCV) and lysine 118. Aspartate 218 acts as the Proton acceptor in catalysis. Serine 373, serine 377, and serine 385 each carry phosphoserine.

It belongs to the protein kinase superfamily. Ser/Thr protein kinase family. As to quaternary structure, interacts with FLS2.

It is found in the cell membrane. The enzyme catalyses L-seryl-[protein] + ATP = O-phospho-L-seryl-[protein] + ADP + H(+). The catalysed reaction is L-threonyl-[protein] + ATP = O-phospho-L-threonyl-[protein] + ADP + H(+). In terms of biological role, involved in the activation of early immune responses. Plays a role in pattern-triggered immunity (PTI) induced by pathogen-associated molecular patterns (PAMPs) and damage-associated molecular patterns (DAMPs). Contributes to PTI in response to the bacterial pathogen Pseudomonas syringae pv maculicola strain ES4326. Contributes to PTI in response to the bacterial pathogen Pseudomonas syringae pv tomato strain DC3000. Functions redundantly with PCRK2 in basal resistance against bacterial pathogens and in regulation of plant immunity. Functions together with PCRK2 downstream of the PAMP receptor FLS2. Contributes to the induction of SARD1 and CBP60G, which are transcriptional activator of ICS1, an enzyme involved in salicylate (SA) biosynthesis upon pathogen attack. This Arabidopsis thaliana (Mouse-ear cress) protein is Serine/threonine-protein kinase PCRK1.